We begin with the raw amino-acid sequence, 723 residues long: BTB/POZ domain-containing protein 18 (723 aa).

Positions 34–102 (CDALLQAEGE…LYTSEMEVSQ (69 aa)) constitute a BTB domain. Disordered stretches follow at residues 150–176 (APIS…PSPL), 188–350 (EGAH…EEGQ), and 370–394 (EPPL…PSGT). Polar residues-rich tracts occupy residues 162 to 174 (RPQT…QTPS) and 195 to 205 (NLPNADSLSDT). 2 stretches are compositionally biased toward low complexity: residues 217 to 227 (QESRSSPSSQR) and 271 to 286 (TSTP…SMPT). Basic and acidic residues-rich tracts occupy residues 303-312 (QGVDKQKPGE) and 327-336 (KPAENKKQSP). Residue Ser414 is modified to Phosphoserine. Residues 603–637 (TPDLEITSSQPLDGQGEKLLHFDSSDPSQRSYNHL) are disordered. A compositionally biased stretch (basic and acidic residues) spans 617-626 (QGEKLLHFDS). The segment covering 627 to 636 (SDPSQRSYNH) has biased composition (polar residues). Residues Ser682 and Ser683 each carry the phosphoserine modification. The segment at 699–723 (LGPTSVPSVWPDPSSESETEVDILT) is disordered. Acidic residues predominate over residues 713–723 (SESETEVDILT).

As to expression, expressed in testis.

Its subcellular location is the nucleus. Its function is as follows. Specifically required during spermatogenesis to promote expression of piRNA precursors. The piRNA metabolic process mediates the repression of transposable elements during meiosis by forming complexes composed of piRNAs and Piwi proteins and governs the methylation and subsequent repression of transposons, which is essential for the germline integrity. Acts by facilitating transcription elongation at piRNA loci during pachytene. The sequence is that of BTB/POZ domain-containing protein 18 from Mus musculus (Mouse).